Consider the following 208-residue polypeptide: Thymidylate kinase (208 aa).

10 to 17 is an ATP binding site; that stretch reads GPDGSGKT.

This sequence belongs to the thymidylate kinase family.

The catalysed reaction is dTMP + ATP = dTDP + ADP. In terms of biological role, phosphorylation of dTMP to form dTDP in both de novo and salvage pathways of dTTP synthesis. This Listeria monocytogenes serotype 4b (strain CLIP80459) protein is Thymidylate kinase.